Here is a 161-residue protein sequence, read N- to C-terminus: MAKEVVEVLVTGGRATAGPPLGPAIGPLGVNVMQVVKEINEKTKDYEGMQVPVKVIVDTETRKFEIEVGIPPTTALIKKELGIETAAHEPRHEVVGNLTLEQVIKIAKMKKDAMLSYTLKNAVKEVLGTCGSMGVTVEGKDPKEVQKEIDAGVYDEYFKEE.

Belongs to the universal ribosomal protein uL11 family. As to quaternary structure, part of the ribosomal stalk of the 50S ribosomal subunit. Interacts with L10 and the large rRNA to form the base of the stalk. L10 forms an elongated spine to which L12 dimers bind in a sequential fashion forming a multimeric L10(L12)X complex.

Functionally, forms part of the ribosomal stalk which helps the ribosome interact with GTP-bound translation factors. This is Large ribosomal subunit protein uL11 from Methanocaldococcus jannaschii (strain ATCC 43067 / DSM 2661 / JAL-1 / JCM 10045 / NBRC 100440) (Methanococcus jannaschii).